The chain runs to 554 residues: Suppressor of hairless homolog (554 aa).

Residues 1 to 31 form a disordered region; the sequence is MYHPHHLPAHGQVQSHQHREDAAATSSRDVN. 3 consecutive DNA-binding regions follow at residues 83–90, 218–227, and 291–323; these read KSYGNEKR, RLRSQTVSTR, and RKVDKQTAILDADDPVSQLHKCAFYLKDTERMY. An IPT/TIG domain is found at 381–471; it reads PNVHSLQLNG…YPTNLTFTFT (91 aa). Residues 489–554 form a disordered region; it reads GSKRPSASMP…NGANMLRTAS (66 aa). A compositionally biased stretch (basic and acidic residues) spans 508-519; it reads DSGRGNESDRGD.

This sequence belongs to the Su(H) family. As to quaternary structure, interacts with activated Notch proteins.

The protein resides in the nucleus. Transcriptional regulator that plays a central role in Notch signaling, a signaling pathway involved in cell-cell communication that regulates a broad spectrum of cell-fate determinations. Acts as a transcriptional repressor when it is not associated with Notch proteins. When associated with some Notch protein, it acts as a transcriptional activator that activates transcription of Notch target genes. Required for the transcriptional expression of Brachyury, suggesting that it participates in notochord differentiation. The chain is Suppressor of hairless homolog (Su(H)) from Ciona intestinalis (Transparent sea squirt).